Consider the following 150-residue polypeptide: Urease accessory protein UreE (150 aa).

It belongs to the UreE family.

The protein localises to the cytoplasm. In terms of biological role, involved in urease metallocenter assembly. Binds nickel. Probably functions as a nickel donor during metallocenter assembly. The chain is Urease accessory protein UreE from Staphylococcus saprophyticus subsp. saprophyticus (strain ATCC 15305 / DSM 20229 / NCIMB 8711 / NCTC 7292 / S-41).